A 2280-amino-acid chain; its full sequence is MKGHQFKSWIFELREILREIKNSHHFLDSWTQFNSVGSFIHIFFHQERFIKLLDPRIWSILLSRNSQGSTSNRYFTIKGVVLFVVAVLLYRINNRNMVERKNLYLTGLLPIPMNSIGPRNDTLEESFGSSNINRLIVSLLYLPKGKKISESCFLDPKESTWVLPITKKCIMPESNWGSRWWRNWIGKKRDSSCKISNETVAGIEISFKEKDIKYLEFLFVYYMDDPICKDHDWEFLDRLSPSKRRNIINLNSRQLFEILVKDWICYLMFAFREKIPIEVEGFFKQQGAGSTIQSNDIEPISHLFSRKKWAISLQNCAQFHMWQFRQDLFVSWGKNPPESDFLRNISRENWIWLDNVWLVNKDRFFSKVRNVSSNIQYDSTRSSFVQVTDSSQLKGSSDQSRDHFDSISNEDSEYHTLINQREIQQLKERSILWDPSFLQTERTELESDRFSKCLSGYSRLFTEREKEMKNHLLPEEIEEFLGNPTRSILSFFSDRWSELHLGSNPTERSTRDQKLLKKEQDVSFVPSRRSENKEIVNIFKIITYLQNTVSIHPISSDPGCDMVPKDELDMHSSHKISFLNKNTFFDLFHLFHDRNRGGYTLHHDFESEERFQEMADLFTLSISEPDLVYHKGFAFSMDSYVLDQKQFLNEVFNSRDESKKKSLLVLPPLFYEENESFYRRIRKKWVRISCGNDLEDPKPKIVVFASNNIMEAVNQYRWIRNLIQIQYSTYGYIRNVWNRFFLMNRSDRNFEYGIQRDQIGNDTLNHRTIMKYTINQHLSNLKKSQKKWFNPLIFISRTERSVNRDPNAYRYKWSNGSKNFQEHLEHFVSKQKSRFQVVFDRLRINQYSIDWSEVIDKKDLSKSLRFVLSKLLLFLSKFLLFLSNSLPFFFVSFGNTPIHRSEIHVYELKGPNDQLCNQLLESIGLQIVHLKKWKPLLLDDHDTSQKSKLLINGGTISPFFFNKIPKWMIDSFHTRNNRRKSFDNTDSYFSMISHDQDNWLNPVKPFHRSSLISSFYKANRLRFLNNPHHFCFYCNKRFPFYVERARINNSDFTYGQFLNILFIRNKIFSLCGGKKKYAFLERDTISPIESQVSNIFIPNDFPQSGDERSNLYKSFHFAIRSDPLVRRAIYSIADISGTPLTEGQIVNFERTYCQPLSDMNLSDSEGKNLYQYLNFNSNMGLIHTPCSEKYLPSEKRKKRSLCLKKCVEKGQMYRTFQRDSAFSTLSKWNLFQTYMPWFLTSTGYKYLNWIFLDTFSDLLPILSSSQKFVSIFHDIMHGSDISWQILQKKFCLPQWNLISEISSKCLHNLLLSEEMIHRNNESPLISTHLRSPNVREFLYSILFLLLVATYIVRTHLLFVSRAYSELQTEFEKVKSWMIPSYMMELRKLLDRYPTSELNSFWLKNLFLVALEKLGDSLEEIRGSASGGNMLWGGGPAYGFKSIRSKKKYWNINLIDLISIIPNPIHRITFSKKTRHLSHTSKEIYSLIRKRKNVNGDWIDDKIESWVANSDSIDDKEREFLVQFSTLTTEKGIDQILLSLTHSDHLSKNDSGYQMIEQPGAIYLRYLVDIHKKYLMNYEFNTFCLAERRIFLAHYQTITYSQTSCGTNSFHFTSHGKPFSLRLALSPSRGILVIGSIGTGRSYLVKYLATNSYVPFITVFLNKFLDNKPKGFLIDDIDIEDSDDIEDSDNIDRDLDTELELLTRMNALTMDMMPEIDRFYITLQFELAKAMSPCIIWIPNIHDLDVNESNYLSLGLLVNYLSRDCERCSTQNILVIASTHIPQKVDPALIAPNKLNTCIKIRRLLIPQQRKHFFTLSYTRGFHLEKKMFHTNGFGSITMGSNVRDLVALTNEALSISITQKKSILDTNTIRSALHRQTWDLRSQVRSVQDHGILFYQIGRAVAQNVLLSNCPIDPISIYMKKKSCNEGDSYLYKWYFELGTSMKKLTILLYLLSCSAGSIAQDLWSLPGPDEKNEITSYGLVENDSDLVHGLLEVEGALVGSSRTEKDYSQFDNDRVTLLLRPKPRNPLDMMQNGSCSIVDQRFLYEKYESEFEEGEGEGVLDPQQIEEDLFNHIVWAPRIWRPWGFLFDCIERPNSLGFPYWARSFRGKRIIYDEKEELQENDSEFLQSGTMQYQTRDRSSKEQGFFRISQFIWDPADPLFFLFKDQPFVSVFSHREFFADEEMSKGLLTSQTDSPTSIYKRWFIKNTQEKHFELLIHRQRWLRTNSSLSNGFFRSNTPSESYQYLSNLFLSNGRLLDQMTKTLLRKRWLFPDEMKIGFM.

An ATP-binding site is contributed by 1634–1641; the sequence is GSIGTGRS.

This sequence belongs to the Ycf2 family.

The protein resides in the plastid. Its subcellular location is the chloroplast stroma. Probable ATPase of unknown function. Its presence in a non-photosynthetic plant (Epifagus virginiana) and experiments in tobacco indicate that it has an essential function which is probably not related to photosynthesis. This chain is Protein Ycf2, found in Eucalyptus globulus subsp. globulus (Tasmanian blue gum).